A 577-amino-acid polypeptide reads, in one-letter code: MGKLIKLITTLTVLVSLLQYCCEFNSGSISCERTQTLCHYTNPRVWNTYFSRNCELYKNKVSPGFDIVARKYDTAVKPVIDDATVKVNKVAIQPAFKVIHSQCKKWNCGKYYQLVRSPMVKTRRFFFAKYNAFVKPNLDKFFTAEFRSHLKERILKYKNIGHYYFTITSRCIKSKYDFIVGNTEEKLMGKFKNKDTHGIHGSVTREPSSEDMVLTVSTMESDEEELTTTSTQTVVETITLDQEEASAVANHAHDDEASTDVEGSTDVNVNEQALLQEDFDMWSETILQKTQDVIQLFEKDVSKYINGKLVEEANHFKAKFQSLDDKSKKFFSKISLAINDIECVEGIDSETGKKIFFDKSGSTEISQYITRELVREYFNETRSTLDELTNAMEKDLSEITDEIEKKVNAIREENVEVFEEWGDIIVNEWSKRMAYVDVINAHMGADDDTTLDEEKAKSSVNWKKFLKGKKQIIESRDKLAHHSADLSRVNAFRQKVQKKILSFTQESGEFLYILRSKANLQFQERERKERERKEREKAAAEEFQRQQELLRQQEEEDEEDVSYTSTSTITTTTTMTL.

The first 23 residues, 1 to 23 (MGKLIKLITTLTVLVSLLQYCCE), serve as a signal peptide directing secretion. 2 coiled-coil regions span residues 379–416 (NETR…ENVE) and 513–561 (ILRS…EEDV). Residues 525 to 545 (RERKERERKEREKAAAEEFQR) show a composition bias toward basic and acidic residues. Residues 525–577 (RERKERERKEREKAAAEEFQRQQELLRQQEEEDEEDVSYTSTSTITTTTTMTL) form a disordered region. The span at 562 to 577 (SYTSTSTITTTTTMTL) shows a compositional bias: low complexity.

Belongs to the SHE10 family. Component of the mitochondria-localized RNase mitochondrial RNA-processing (RNase MRP) composed of one single RNA encoded by the NME1 gene and at least 31 proteins. Absent in the nucleus-localized RNase MRP (NuMRP).

The protein localises to the mitochondrion. Its function is as follows. Involved in spore wall assembly. May be a component of the mitochondrial RNase MRP (MtMRP), a ribonucleoprotein endoribonuclease involved in the cleaving RNA transcripts to generate primers for DNA replication in mitochondria. In Saccharomyces cerevisiae (strain YJM789) (Baker's yeast), this protein is Outer spore wall assembly protein SHE10.